Here is a 125-residue protein sequence, read N- to C-terminus: Glycine cleavage system H protein (125 aa).

The Lipoyl-binding domain occupies 23–105; that stretch reads VSTVGITEHA…FEGGWLFKVR (83 aa). N6-lipoyllysine is present on Lys64.

It belongs to the GcvH family. The glycine cleavage system is composed of four proteins: P, T, L and H. (R)-lipoate serves as cofactor.

Functionally, the glycine cleavage system catalyzes the degradation of glycine. The H protein shuttles the methylamine group of glycine from the P protein to the T protein. The polypeptide is Glycine cleavage system H protein (Streptomyces avermitilis (strain ATCC 31267 / DSM 46492 / JCM 5070 / NBRC 14893 / NCIMB 12804 / NRRL 8165 / MA-4680)).